Consider the following 450-residue polypeptide: Tubulin alpha-6 chain (450 aa).

The GTP site is built by Q11, E71, G144, T145, T179, N206, and N228. Residue E71 coordinates Mg(2+). The active site involves E254.

Belongs to the tubulin family. Dimer of alpha and beta chains. A typical microtubule is a hollow water-filled tube with an outer diameter of 25 nm and an inner diameter of 15 nM. Alpha-beta heterodimers associate head-to-tail to form protofilaments running lengthwise along the microtubule wall with the beta-tubulin subunit facing the microtubule plus end conferring a structural polarity. Microtubules usually have 13 protofilaments but different protofilament numbers can be found in some organisms and specialized cells. Requires Mg(2+) as cofactor. Undergoes a tyrosination/detyrosination cycle, the cyclic removal and re-addition of a C-terminal tyrosine residue by the enzymes tubulin tyrosine carboxypeptidase (TTCP) and tubulin tyrosine ligase (TTL), respectively.

It is found in the cytoplasm. It localises to the cytoskeleton. It carries out the reaction GTP + H2O = GDP + phosphate + H(+). Tubulin is the major constituent of microtubules, a cylinder consisting of laterally associated linear protofilaments composed of alpha- and beta-tubulin heterodimers. Microtubules grow by the addition of GTP-tubulin dimers to the microtubule end, where a stabilizing cap forms. Below the cap, tubulin dimers are in GDP-bound state, owing to GTPase activity of alpha-tubulin. This chain is Tubulin alpha-6 chain (TUBA6), found in Zea mays (Maize).